The chain runs to 377 residues: Protein ECM9 (377 aa).

May be involved in cell wall organization and biogenesis. This Saccharomyces cerevisiae (strain ATCC 204508 / S288c) (Baker's yeast) protein is Protein ECM9 (ECM9).